Here is a 319-residue protein sequence, read N- to C-terminus: Inositol-tetrakisphosphate 1-kinase (319 aa).

1D-myo-inositol 1,3,4,6-tetrakisphosphate is bound by residues Lys17 and Lys57. Lys17 contributes to the 1D-myo-inositol 1,3,4-trisphosphate binding site. ADP-binding residues include Arg94 and Lys136. Positions 94 and 136 each coordinate ATP. The ATP-grasp domain occupies 98–317 (NALLIKNNIP…KVALCYTEVA (220 aa)). 3 residues coordinate 1D-myo-inositol 1,3,4,6-tetrakisphosphate: Gln141, Gly142, and His147. Positions 141, 142, and 147 each coordinate 1D-myo-inositol 1,3,4-trisphosphate. ADP contacts are provided by His147, Gln168, His169, Tyr170, and Ile171. ATP-binding residues include His147, Gln168, His169, Tyr170, and Ile171. Residue Lys179 participates in 1D-myo-inositol 1,3,4,6-tetrakisphosphate binding. Residues Ser194 and Asn210 each coordinate ADP. Position 194 (Ser194) interacts with ATP. Asp275 is a binding site for Mg(2+). ADP-binding residues include Val288 and Asp289. Residues Val288, Asp289, and Asn291 each contribute to the ATP site. Positions 289, 291, and 295 each coordinate 1D-myo-inositol 1,3,4,6-tetrakisphosphate. Asp289 and Asn291 together coordinate Mg(2+). Residues Asn291 and Ser295 each contribute to the 1D-myo-inositol 1,3,4-trisphosphate site.

It belongs to the ITPK1 family. In terms of assembly, monomer. Mg(2+) serves as cofactor.

The catalysed reaction is 1D-myo-inositol 3,4,5,6-tetrakisphosphate + ATP = 1D-myo-inositol 1,3,4,5,6-pentakisphosphate + ADP + H(+). It catalyses the reaction 1D-myo-inositol 1,3,4-trisphosphate + ATP = 1D-myo-inositol 1,3,4,5-tetrakisphosphate + ADP + H(+). The enzyme catalyses 1D-myo-inositol 1,3,4-trisphosphate + ATP = 1D-myo-inositol 1,3,4,6-tetrakisphosphate + ADP + H(+). In terms of biological role, kinase that can phosphorylate various inositol polyphosphate such as Ins(3,4,5,6)P4 or Ins(1,3,4)P3. Phosphorylates Ins(3,4,5,6)P4 at position 1 to form Ins(1,3,4,5,6)P5. This reaction is thought to have regulatory importance, since Ins(3,4,5,6)P4 is an inhibitor of plasma membrane Ca(2+)-activated Cl(-) channels, while Ins(1,3,4,5,6)P5 is not. Also phosphorylates Ins(1,3,4)P3 on O-5 and O-6 to form Ins(1,3,4,6)P4, an essential molecule in the hexakisphosphate (InsP6) pathway. May also act as an isomerase that interconverts the inositol tetrakisphosphate isomers Ins(1,3,4,5)P4 and Ins(1,3,4,6)P4 in the presence of ADP and magnesium. In Entamoeba histolytica (strain ATCC 30459 / HM-1:IMSS / ABRM), this protein is Inositol-tetrakisphosphate 1-kinase (ITPK1).